Consider the following 338-residue polypeptide: Ketol-acid reductoisomerase (NADP(+)) (338 aa).

Residues 1 to 181 (MQVYYDKDCD…GGGRTGIIET (181 aa)) enclose the KARI N-terminal Rossmann domain. Residues 24-27 (YGSQ), Arg47, Ser50, Ser52, and 82-85 (DEFQ) contribute to the NADP(+) site. The active site involves His107. Gly133 contacts NADP(+). The KARI C-terminal knotted domain occupies 182–327 (TFKDETETDL…EKLRSMMPWI (146 aa)). Residues Asp190, Glu194, Glu226, and Glu230 each contribute to the Mg(2+) site. Ser251 lines the substrate pocket.

The protein belongs to the ketol-acid reductoisomerase family. Mg(2+) serves as cofactor.

It catalyses the reaction (2R)-2,3-dihydroxy-3-methylbutanoate + NADP(+) = (2S)-2-acetolactate + NADPH + H(+). It carries out the reaction (2R,3R)-2,3-dihydroxy-3-methylpentanoate + NADP(+) = (S)-2-ethyl-2-hydroxy-3-oxobutanoate + NADPH + H(+). It participates in amino-acid biosynthesis; L-isoleucine biosynthesis; L-isoleucine from 2-oxobutanoate: step 2/4. It functions in the pathway amino-acid biosynthesis; L-valine biosynthesis; L-valine from pyruvate: step 2/4. Its function is as follows. Involved in the biosynthesis of branched-chain amino acids (BCAA). Catalyzes an alkyl-migration followed by a ketol-acid reduction of (S)-2-acetolactate (S2AL) to yield (R)-2,3-dihydroxy-isovalerate. In the isomerase reaction, S2AL is rearranged via a Mg-dependent methyl migration to produce 3-hydroxy-3-methyl-2-ketobutyrate (HMKB). In the reductase reaction, this 2-ketoacid undergoes a metal-dependent reduction by NADPH to yield (R)-2,3-dihydroxy-isovalerate. The chain is Ketol-acid reductoisomerase (NADP(+)) from Hahella chejuensis (strain KCTC 2396).